A 435-amino-acid polypeptide reads, in one-letter code: Probable tRNA pseudouridine synthase D (435 aa).

Catalysis depends on aspartate 95, which acts as the Nucleophile. Positions 170-396 (GVPNYFGTQR…SSGTRRAVLV (227 aa)) constitute a TRUD domain.

This sequence belongs to the pseudouridine synthase TruD family.

The enzyme catalyses uridine(13) in tRNA = pseudouridine(13) in tRNA. Could be responsible for synthesis of pseudouridine from uracil-13 in transfer RNAs. The chain is Probable tRNA pseudouridine synthase D from Natronomonas pharaonis (strain ATCC 35678 / DSM 2160 / CIP 103997 / JCM 8858 / NBRC 14720 / NCIMB 2260 / Gabara) (Halobacterium pharaonis).